Reading from the N-terminus, the 397-residue chain is Enoyl-[acyl-carrier-protein] reductase [NADH] (397 aa).

NAD(+) is bound by residues 48 to 53, 74 to 75, 111 to 112, and 139 to 140; these read GASTGY, FE, DA, and VA. Tyr225 provides a ligand contact to substrate. The active-site Proton donor is Tyr235. Residues Lys244 and 273–275 contribute to the NAD(+) site; that span reads VVT.

It belongs to the TER reductase family. As to quaternary structure, monomer.

It carries out the reaction a 2,3-saturated acyl-[ACP] + NAD(+) = a (2E)-enoyl-[ACP] + NADH + H(+). It participates in lipid metabolism; fatty acid biosynthesis. In terms of biological role, involved in the final reduction of the elongation cycle of fatty acid synthesis (FAS II). Catalyzes the reduction of a carbon-carbon double bond in an enoyl moiety that is covalently linked to an acyl carrier protein (ACP). The sequence is that of Enoyl-[acyl-carrier-protein] reductase [NADH] from Burkholderia pseudomallei (strain 668).